We begin with the raw amino-acid sequence, 472 residues long: Cannabinoid receptor 1 (472 aa).

Residues 1–116 lie on the Extracellular side of the membrane; sequence MKSILDGLAD…CFMILNPSQQ (116 aa). The interval 2–23 is required for mitochondrial localization; sequence KSILDGLADTTFRTITTDLLYV. N-linked (GlcNAc...) asparagine glycosylation is found at asparagine 77 and asparagine 83. The chain crosses the membrane as a helical span at residues 117 to 142; the sequence is LAIAVLSLTLGTFTVLENLLVLCVIL. The Cytoplasmic segment spans residues 143-154; the sequence is HSRSLRCRPSYH. A helical membrane pass occupies residues 155–175; sequence FIGSLAVADLLGSVIFVYSFV. At 176-187 the chain is on the extracellular side; it reads DFHVFHRKDSPN. Residues 188 to 212 form a helical membrane-spanning segment; sequence VFLFKLGGVTASFTASVGSLFLTAI. The Cytoplasmic portion of the chain corresponds to 213–232; sequence DRYISIHRPLAYKKIVTRPK. Residues 233–255 traverse the membrane as a helical segment; that stretch reads AVVAFCLMWTIAIVIAVLPLLGW. Residues 256 to 273 are Extracellular-facing; it reads NCKKLQSVCSDIFPLIDE. Residues 274 to 299 traverse the membrane as a helical segment; it reads TYLMFWIGVTSVLLLFIVYAYMYILW. At 300 to 344 the chain is on the cytoplasmic side; the sequence is KAHIHAVRMIQRGTQKSIIIHTSEDGKVQVTRPDQARMDIRLAKT. Residues 345-365 form a helical membrane-spanning segment; that stretch reads LVLILVVLIICWGPLLAIMVY. Over 366-377 the chain is Extracellular; the sequence is DVFGKMNKLIKT. Residues 378 to 399 traverse the membrane as a helical segment; sequence VFAFCSMLCLLNSTVNPIIYAL. The Cytoplasmic portion of the chain corresponds to 400-472; it reads RSKDLRHAFR…VSTNTSAKAL (73 aa). Cysteine 415 is lipidated: S-palmitoyl cysteine. Phosphoserine occurs at positions 425 and 429.

Belongs to the G-protein coupled receptor 1 family. Interacts (via C-terminus) with CNRIP1; this interaction attenuates constitutive, but not agonist-dependent, inhibition of voltage-gated Ca(2+) channels in neurons. Associates with G protein alpha subunits, including G(i) alpha-1/GNAI1, G(i) alpha-3/GNAI3 and G(o)-alpha/GNAO1; palmitoylation is important for interaction with GNAI3 and GNAO1. Post-translationally, palmitoylation at Cys-415 is important for recruitment at plasma membrane and lipid rafts and association with G protein alpha subunits. In terms of tissue distribution, expressed in cerebral arterial muscle cells and cerebral cortex (at protein level).

It is found in the cell membrane. Its subcellular location is the membrane raft. The protein resides in the mitochondrion outer membrane. It localises to the cell projection. The protein localises to the axon. It is found in the presynapse. Its activity is regulated as follows. Hemopressin, a peptide derived from hemoglobin subunit alpha (HBA1 and/or HBA2), acts as an antagonist peptide: hemopressin-binding efficiently blocks cannabinoid receptor CNR1 and subsequent signaling. Functionally, G-protein coupled receptor for endogenous cannabinoids (eCBs), including N-arachidonoylethanolamide (also called anandamide or AEA) and 2-arachidonoylglycerol (2-AG), as well as phytocannabinoids, such as delta(9)-tetrahydrocannabinol (THC). Mediates many cannabinoid-induced effects, acting, among others, on food intake, memory loss, gastrointestinal motility, catalepsy, ambulatory activity, anxiety, chronic pain. Signaling typically involves reduction in cyclic AMP. In the hypothalamus, may have a dual effect on mitochondrial respiration depending upon the agonist dose and possibly upon the cell type. Increases respiration at low doses, while decreases respiration at high doses. At high doses, CNR1 signal transduction involves G-protein alpha-i protein activation and subsequent inhibition of mitochondrial soluble adenylate cyclase, decrease in cyclic AMP concentration, inhibition of protein kinase A (PKA)-dependent phosphorylation of specific subunits of the mitochondrial electron transport system, including NDUFS2. In the hypothalamus, inhibits leptin-induced reactive oxygen species (ROS) formation and mediates cannabinoid-induced increase in SREBF1 and FASN gene expression. In response to cannabinoids, drives the release of orexigenic beta-endorphin, not that of melanocyte-stimulating hormone alpha/alpha-MSH, from hypothalamic POMC neurons, hence promoting food intake. In the hippocampus, regulates cellular respiration and energy production in response to cannabinoids. Involved in cannabinoid-dependent depolarization-induced suppression of inhibition (DSI), a process in which depolarization of CA1 postsynaptic pyramidal neurons mobilizes eCBs, which retrogradely activate presynaptic CB1 receptors, transiently decreasing GABAergic inhibitory neurotransmission. Also reduces excitatory synaptic transmission. In superior cervical ganglions and cerebral vascular smooth muscle cells, inhibits voltage-gated Ca(2+) channels in a constitutive, as well as agonist-dependent manner. In cerebral vascular smooth muscle cells, inhibition of voltage-gated Ca(2+) channels leads to vasodilation and decrease in vascular tone. Induces leptin production in adipocytes and reduces LRP2-mediated leptin clearance in the kidney, hence participating in hyperleptinemia. In adipose tissue, CNR1 signaling leads to increased expression of SREBF1, ACACA and FASN genes. In the liver, activation by endocannabinoids leads to increased de novo lipogenesis and reduced fatty acid catabolism, associated with increased expression of SREBF1/SREBP-1, GCK, ACACA, ACACB and FASN genes. May also affect de novo cholesterol synthesis and HDL-cholesteryl ether uptake. Peripherally modulates energy metabolism. In high carbohydrate diet-induced obesity, may decrease the expression of mitochondrial dihydrolipoyl dehydrogenase/DLD in striated muscles, as well as that of selected glucose/ pyruvate metabolic enzymes, hence affecting energy expenditure through mitochondrial metabolism. In response to cannabinoid anandamide, elicits a pro-inflammatory response in macrophages, which involves NLRP3 inflammasome activation and IL1B and IL18 secretion. In macrophages infiltrating pancreatic islets, this process may participate in the progression of type-2 diabetes and associated loss of pancreatic beta-cells. In Felis catus (Cat), this protein is Cannabinoid receptor 1 (CNR1).